The chain runs to 649 residues: tRNA-guanine(15) transglycosylase (649 aa).

Asp-88 serves as the catalytic Nucleophile. The substrate site is built by Asp-123 and Ala-194. Zn(2+) is bound by residues Cys-280, Cys-282, and Cys-285. The 76-residue stretch at 572–647 (KYRVIVDKSV…VAVNIRGGLK (76 aa)) folds into the PUA domain.

The protein belongs to the archaeosine tRNA-ribosyltransferase family. Zn(2+) is required as a cofactor.

The catalysed reaction is guanosine(15) in tRNA + 7-cyano-7-deazaguanine = 7-cyano-7-carbaguanosine(15) in tRNA + guanine. Its pathway is tRNA modification; archaeosine-tRNA biosynthesis. Exchanges the guanine residue with 7-cyano-7-deazaguanine (preQ0) at position 15 in the dihydrouridine loop (D-loop) of archaeal tRNAs. The chain is tRNA-guanine(15) transglycosylase from Methanococcus vannielii (strain ATCC 35089 / DSM 1224 / JCM 13029 / OCM 148 / SB).